The sequence spans 309 residues: Elongation factor Ts (309 aa).

The interval 98 to 101 (TDFV) is involved in Mg(2+) ion dislocation from EF-Tu.

Belongs to the EF-Ts family.

The protein localises to the cytoplasm. In terms of biological role, associates with the EF-Tu.GDP complex and induces the exchange of GDP to GTP. It remains bound to the aminoacyl-tRNA.EF-Tu.GTP complex up to the GTP hydrolysis stage on the ribosome. This chain is Elongation factor Ts, found in Orientia tsutsugamushi (strain Boryong) (Rickettsia tsutsugamushi).